Here is a 449-residue protein sequence, read N- to C-terminus: tRNA modification GTPase MnmE (449 aa).

Residues R24, E85, and R124 each contribute to the (6S)-5-formyl-5,6,7,8-tetrahydrofolate site. A TrmE-type G domain is found at 220 to 369 (GIRTAIAGPP…LEEAIIQAFS (150 aa)). A K(+)-binding site is contributed by N230. Residues 230–235 (NVGKSS), 249–255 (SNIAGTT), and 274–277 (DTAG) contribute to the GTP site. A Mg(2+)-binding site is contributed by S234. S249, I251, and T254 together coordinate K(+). Residue T255 participates in Mg(2+) binding. K449 contributes to the (6S)-5-formyl-5,6,7,8-tetrahydrofolate binding site.

This sequence belongs to the TRAFAC class TrmE-Era-EngA-EngB-Septin-like GTPase superfamily. TrmE GTPase family. Homodimer. Heterotetramer of two MnmE and two MnmG subunits. Requires K(+) as cofactor.

The protein resides in the cytoplasm. Functionally, exhibits a very high intrinsic GTPase hydrolysis rate. Involved in the addition of a carboxymethylaminomethyl (cmnm) group at the wobble position (U34) of certain tRNAs, forming tRNA-cmnm(5)s(2)U34. The polypeptide is tRNA modification GTPase MnmE (Akkermansia muciniphila (strain ATCC BAA-835 / DSM 22959 / JCM 33894 / BCRC 81048 / CCUG 64013 / CIP 107961 / Muc)).